The chain runs to 376 residues: MPSLISQQWQERTSGFFSSSGTKLREAGQTAGSFVGEVAKDAKVNVADVAERVGSLFKSRWAILQQPATRHAVQEHLITAAATTGTFVRKGITETKEKVSVGKIKVEEAAKKTAQKSKTILTDIERWQKGVASSDVFGVAIEITVQRQESSRPIPLILVKCADYLILTGLNSPNLFKAEGDRKLIQQLVSAYNQDPRASIPEGVNPVDVAALLKYYLASLPTPLTTFELYNEIKDARSSIHRMRQSLQKLSNVNYNTLEFITALLLRVSQKSLLNKMDSHSLAMEMAPVIMWREDNRPESYREYWRRPSRSPKKSNDFETATPWDLLSDEGEGPDASSSIPLDDIARVDFGAVEVVQCLIEHHNAIFTDAAETVWR.

Serine 59 is subject to Phosphoserine. A Rho-GAP domain is found at 139-367 (VAIEITVQRQ…CLIEHHNAIF (229 aa)). A disordered region spans residues 307–338 (RPSRSPKKSNDFETATPWDLLSDEGEGPDASS).

This is an uncharacterized protein from Arabidopsis thaliana (Mouse-ear cress).